The primary structure comprises 306 residues: Dermonecrotic toxin LiSicTox-alphaIA2bi (306 aa).

The signal sequence occupies residues 1–18 (MLPYIALILVCWSVLSQA). Residues 19–26 (AQTDVEGR) constitute a propeptide that is removed on maturation. The active site involves His38. Mg(2+) contacts are provided by Glu58 and Asp60. His74 (nucleophile) is an active-site residue. 2 disulfide bridges follow: Cys78-Cys84 and Cys80-Cys223. Asp118 contacts Mg(2+). N-linked (GlcNAc...) asparagine glycosylation occurs at Asn283.

It belongs to the arthropod phospholipase D family. Class II subfamily. It depends on Mg(2+) as a cofactor. As to expression, expressed by the venom gland.

The protein localises to the secreted. It carries out the reaction an N-(acyl)-sphingosylphosphocholine = an N-(acyl)-sphingosyl-1,3-cyclic phosphate + choline. The enzyme catalyses an N-(acyl)-sphingosylphosphoethanolamine = an N-(acyl)-sphingosyl-1,3-cyclic phosphate + ethanolamine. The catalysed reaction is a 1-acyl-sn-glycero-3-phosphocholine = a 1-acyl-sn-glycero-2,3-cyclic phosphate + choline. It catalyses the reaction a 1-acyl-sn-glycero-3-phosphoethanolamine = a 1-acyl-sn-glycero-2,3-cyclic phosphate + ethanolamine. Functionally, dermonecrotic toxins cleave the phosphodiester linkage between the phosphate and headgroup of certain phospholipids (sphingolipid and lysolipid substrates), forming an alcohol (often choline) and a cyclic phosphate. This toxin acts on sphingomyelin (SM). It may also act on ceramide phosphoethanolamine (CPE), lysophosphatidylcholine (LPC) and lysophosphatidylethanolamine (LPE), but not on lysophosphatidylserine (LPS), and lysophosphatidylglycerol (LPG). It acts by transphosphatidylation, releasing exclusively cyclic phosphate products as second products. Induces dermonecrosis, hemolysis, increased vascular permeability, edema, inflammatory response, and platelet aggregation. This chain is Dermonecrotic toxin LiSicTox-alphaIA2bi, found in Loxosceles intermedia (Brown spider).